Consider the following 666-residue polypeptide: Pentatricopeptide repeat-containing protein At1g64100 (666 aa).

PPR repeat units follow at residues 105 to 139 (TAVD…RIPL), 140 to 174 (NIYS…GFQP), 175 to 209 (DVVT…GFLE), 225 to 259 (VVIT…GLHI), 260 to 294 (DVVT…HIKP), 295 to 329 (DVVI…GIAP), 330 to 364 (NVFT…EINP), 365 to 399 (DVLT…CIFP), 400 to 430 (DTVT…MASP), 431 to 465 (DVVT…GLVA), 466 to 500 (NTTT…GVCP), 501 to 535 (DTIT…KIDL), 536 to 570 (DTVA…GVEP), 571 to 605 (DVQT…GHEP), and 606 to 640 (DNST…GFSG).

This sequence belongs to the PPR family. P subfamily.

The polypeptide is Pentatricopeptide repeat-containing protein At1g64100 (Arabidopsis thaliana (Mouse-ear cress)).